The sequence spans 402 residues: Heat stress transcription factor A-6a (402 aa).

Positions 1–28 are disordered; the sequence is MLKPQTPRARRAAHPNSHMASSSSSSSL. A coiled-coil region spans residues 212–258; that stretch reads EVVSLKRDRAALRAEVIMLKQQYNACKSQLIAMEEMVRNIERRQQQT. Positions 216-266 are hydrophobic repeat HR-A/B; that stretch reads LKRDRAALRAEVIMLKQQYNACKSQLIAMEEMVRNIERRQQQTIGFFAKVL. The Nuclear localization signal motif lies at 290 to 293; the sequence is KRQR. An AHA motif is present at residues 349–358; the sequence is DDVWEELDAL.

It belongs to the HSF family. Class A subfamily. In terms of assembly, homotrimer. Post-translationally, exhibits temperature-dependent phosphorylation.

It localises to the nucleus. Its function is as follows. Transcriptional regulator that specifically binds DNA of heat shock promoter elements (HSE). In Oryza sativa subsp. japonica (Rice), this protein is Heat stress transcription factor A-6a (HSFA6B).